The primary structure comprises 191 residues: Prostaglandin-H2 D-isomerase (191 aa).

A signal peptide spans 1–24; it reads MATPNRPWMGLLLLGVLGVLQTPA. Residue asparagine 51 is glycosylated (N-linked (GlcNAc...) asparagine). Residue cysteine 65 is the Nucleophile of the active site. An N-linked (GlcNAc...) asparagine glycan is attached at asparagine 78. Cysteines 89 and 186 form a disulfide.

Belongs to the calycin superfamily. Lipocalin family. In terms of assembly, monomer. As to expression, in the male reproductive system, it is expressed in the testis and epididymis, and is secreted into the seminal fluid.

The protein resides in the rough endoplasmic reticulum. Its subcellular location is the nucleus membrane. It localises to the golgi apparatus. The protein localises to the cytoplasm. It is found in the perinuclear region. The protein resides in the secreted. The enzyme catalyses prostaglandin H2 = prostaglandin D2. Functionally, catalyzes the conversion of PGH2 to PGD2, a prostaglandin involved in smooth muscle contraction/relaxation and a potent inhibitor of platelet aggregation. Involved in a variety of CNS functions, such as sedation, NREM sleep and PGE2-induced allodynia, and may have an anti-apoptotic role in oligodendrocytes. Binds small non-substrate lipophilic molecules, including biliverdin, bilirubin, retinal, retinoic acid and thyroid hormone, and may act as a scavenger for harmful hydrophobic molecules and as a secretory retinoid and thyroid hormone transporter. Possibly involved in development and maintenance of the blood-brain, blood-retina, blood-aqueous humor and blood-testis barrier. It is likely to play important roles in both maturation and maintenance of the central nervous system and male reproductive system. Involved in PLA2G3-dependent maturation of mast cells. PLA2G3 is secreted by immature mast cells and acts on nearby fibroblasts upstream to PTDGS to synthesize PGD2, which in turn promotes mast cell maturation and degranulation via PTGDR. The protein is Prostaglandin-H2 D-isomerase (PTGDS) of Ovis aries (Sheep).